Consider the following 330-residue polypeptide: N-acetyl-gamma-glutamyl-phosphate reductase (330 aa).

Cysteine 143 is an active-site residue.

The protein belongs to the NAGSA dehydrogenase family. Type 1 subfamily.

It is found in the cytoplasm. The catalysed reaction is N-acetyl-L-glutamate 5-semialdehyde + phosphate + NADP(+) = N-acetyl-L-glutamyl 5-phosphate + NADPH + H(+). It participates in amino-acid biosynthesis; L-arginine biosynthesis; N(2)-acetyl-L-ornithine from L-glutamate: step 3/4. Functionally, catalyzes the NADPH-dependent reduction of N-acetyl-5-glutamyl phosphate to yield N-acetyl-L-glutamate 5-semialdehyde. The polypeptide is N-acetyl-gamma-glutamyl-phosphate reductase (Methanocorpusculum labreanum (strain ATCC 43576 / DSM 4855 / Z)).